A 219-amino-acid chain; its full sequence is Lipid A acyltransferase PagP (219 aa).

Residues methionine 1–alanine 28 form the signal peptide. The segment at isoleucine 39 to phenylalanine 63 is disordered. Residues threonine 49–proline 59 are compositionally biased toward basic and acidic residues. Residues histidine 91, aspartate 134, and serine 135 contribute to the active site.

This sequence belongs to the lipid A palmitoyltransferase family. As to quaternary structure, homodimer.

Its subcellular location is the cell outer membrane. It carries out the reaction a lipid A + a 1,2-diacyl-sn-glycero-3-phosphocholine = a hepta-acyl lipid A + a 2-acyl-sn-glycero-3-phosphocholine. It catalyses the reaction a lipid IVA + a 1,2-diacyl-sn-glycero-3-phosphocholine = a lipid IVB + a 2-acyl-sn-glycero-3-phosphocholine. The catalysed reaction is a lipid IIA + a 1,2-diacyl-sn-glycero-3-phosphocholine = a lipid IIB + a 2-acyl-sn-glycero-3-phosphocholine. In terms of biological role, transfers a fatty acid residue from the sn-1 position of a phospholipid to the N-linked hydroxyfatty acid chain on the proximal unit of lipid A or its precursors. The polypeptide is Lipid A acyltransferase PagP (Dickeya zeae (strain Ech586) (Dickeya dadantii (strain Ech586))).